We begin with the raw amino-acid sequence, 522 residues long: 2-isopropylmalate synthase (522 aa).

The Pyruvate carboxyltransferase domain maps to Val-5–His-267. Positions 14, 202, 204, and 238 each coordinate Mn(2+). Residues Gln-392–Val-522 form a regulatory domain region.

Belongs to the alpha-IPM synthase/homocitrate synthase family. LeuA type 1 subfamily. In terms of assembly, homodimer. It depends on Mn(2+) as a cofactor.

The protein resides in the cytoplasm. It carries out the reaction 3-methyl-2-oxobutanoate + acetyl-CoA + H2O = (2S)-2-isopropylmalate + CoA + H(+). It functions in the pathway amino-acid biosynthesis; L-leucine biosynthesis; L-leucine from 3-methyl-2-oxobutanoate: step 1/4. In terms of biological role, catalyzes the condensation of the acetyl group of acetyl-CoA with 3-methyl-2-oxobutanoate (2-ketoisovalerate) to form 3-carboxy-3-hydroxy-4-methylpentanoate (2-isopropylmalate). The polypeptide is 2-isopropylmalate synthase (Shewanella sp. (strain MR-4)).